The chain runs to 407 residues: Na(+)-translocating NADH-quinone reductase subunit F (407 aa).

Residues 4 to 24 traverse the membrane as a helical segment; the sequence is IILGVFFFTAIVVALVFVILG. The 93-residue stretch at 33–125 folds into the 2Fe-2S ferredoxin-type domain; it reads GNVEVLINGE…NMKIHVHEEV (93 aa). [2Fe-2S] cluster contacts are provided by C68, C74, C77, and C109. Positions 128-269 constitute an FAD-binding FR-type domain; it reads VKKWECTVRS…SGPFGEFFAR (142 aa).

It belongs to the NqrF family. In terms of assembly, composed of six subunits; NqrA, NqrB, NqrC, NqrD, NqrE and NqrF. [2Fe-2S] cluster is required as a cofactor. FAD serves as cofactor.

Its subcellular location is the cell inner membrane. It carries out the reaction a ubiquinone + n Na(+)(in) + NADH + H(+) = a ubiquinol + n Na(+)(out) + NAD(+). In terms of biological role, NQR complex catalyzes the reduction of ubiquinone-1 to ubiquinol by two successive reactions, coupled with the transport of Na(+) ions from the cytoplasm to the periplasm. The first step is catalyzed by NqrF, which accepts electrons from NADH and reduces ubiquinone-1 to ubisemiquinone by a one-electron transfer pathway. In Methylococcus capsulatus (strain ATCC 33009 / NCIMB 11132 / Bath), this protein is Na(+)-translocating NADH-quinone reductase subunit F.